A 305-amino-acid chain; its full sequence is UDP-3-O-acyl-N-acetylglucosamine deacetylase (305 aa).

Residues His79, His238, and Asp242 each coordinate Zn(2+). The active-site Proton donor is the His265.

The protein belongs to the LpxC family. Zn(2+) serves as cofactor.

It carries out the reaction a UDP-3-O-[(3R)-3-hydroxyacyl]-N-acetyl-alpha-D-glucosamine + H2O = a UDP-3-O-[(3R)-3-hydroxyacyl]-alpha-D-glucosamine + acetate. It functions in the pathway glycolipid biosynthesis; lipid IV(A) biosynthesis; lipid IV(A) from (3R)-3-hydroxytetradecanoyl-[acyl-carrier-protein] and UDP-N-acetyl-alpha-D-glucosamine: step 2/6. Functionally, catalyzes the hydrolysis of UDP-3-O-myristoyl-N-acetylglucosamine to form UDP-3-O-myristoylglucosamine and acetate, the committed step in lipid A biosynthesis. This is UDP-3-O-acyl-N-acetylglucosamine deacetylase from Mannheimia succiniciproducens (strain KCTC 0769BP / MBEL55E).